The following is a 448-amino-acid chain: Tumor necrosis factor receptor superfamily member EDAR (448 aa).

Residues 1 to 26 (MAHVGDCKWMSWLPVLVVSLMCSAKA) form the signal peptide. At 27-187 (EDSNCGENEY…LSGQGHLATA (161 aa)) the chain is on the extracellular side. TNFR-Cys repeat units lie at residues 30 to 71 (NCGE…DYGC), 73 to 113 (PCPA…DAEC), and 115 to 150 (PCLP…ECVG). Intrachain disulfides connect Cys31-Cys44, Cys47-Cys60, Cys50-Cys71, Cys74-Cys87, Cys93-Cys113, and Cys135-Cys148. Residue Asn38 is glycosylated (N-linked (GlcNAc...) asparagine). The chain crosses the membrane as a helical span at residues 188-208 (LIIAMSTIFIMAIAIVLIIMF). Over 209-448 (YIMKTKPSAP…PPASPPPAAS (240 aa)) the chain is Cytoplasmic. The segment covering 220 to 229 (CCSSPPGKSA) has biased composition (low complexity). The tract at residues 220–297 (CCSSPPGKSA…EEPAPDKQGS (78 aa)) is disordered. Residues 258–283 (LTATPTKTPKSENDASSENEQLLSRS) show a composition bias toward polar residues. Positions 358-431 (RMLSSTYNSE…DAVESLCADI (74 aa)) constitute a Death domain.

As to quaternary structure, binds to EDARADD. Associates with TRAF1, TRAF2, TRAF3 and NIK.

Its subcellular location is the membrane. Receptor for EDA isoform TAA, but not for EDA isoform TA-2. May mediate the activation of NF-kappa-B and JNK. May promote caspase-independent cell death. This is Tumor necrosis factor receptor superfamily member EDAR (Edar) from Mus musculus (Mouse).